Here is an 897-residue protein sequence, read N- to C-terminus: Transportin-2 (897 aa).

20 HEAT repeats span residues 9–36 (GLQQ…DKLK), 41–79 (FPDF…AHYQ), 88–121 (FIKQ…KGEL), 127–164 (LLPQ…LDSD), 171–201 (NIMI…QFIM), 214–241 (FIEH…VMLL), 253–280 (HSII…FWLT), 296–386 (VQLI…LANV), 394–422 (HLLP…GAIA), 434–461 (PELI…TLSR), 475–508 (LKPL…EEEA), 516–549 (LSYI…ADSV), 557–595 (EYIQ…TALQ), 603–654 (EPVY…GLGG), 665–696 (IMTL…KACF), 704–737 (AEFM…MQMG), 745–790 (QMVL…YVCP), 798–831 (QQFI…IGVN), 840–871 (IFFC…KDQV), and 874–894 (DNWQ…LAAF). An Importin N-terminal domain is found at 31 to 99 (VQDKLKQLNQ…KQECLNNIGD (69 aa)). The interval 325–364 (AVPDSEQDIKPRFHKSRTVTLPHEAERPDGSEDAEDDDDD) is disordered. Positions 355 to 364 (SEDAEDDDDD) are enriched in acidic residues. An N6-acetyllysine modification is found at Lys-862.

Belongs to the importin beta family. Importin beta-2 subfamily.

Its subcellular location is the cytoplasm. The protein resides in the nucleus. Probably functions in nuclear protein import as nuclear transport receptor. Serves as receptor for nuclear localization signals (NLS) in cargo substrates. Is thought to mediate docking of the importin/substrate complex to the nuclear pore complex (NPC) through binding to nucleoporin and the complex is subsequently translocated through the pore by an energy requiring, Ran-dependent mechanism. At the nucleoplasmic side of the NPC, Ran binds to the importin, the importin/substrate complex dissociates and importin is re-exported from the nucleus to the cytoplasm where GTP hydrolysis releases Ran. The directionality of nuclear import is thought to be conferred by an asymmetric distribution of the GTP- and GDP-bound forms of Ran between the cytoplasm and nucleus. This chain is Transportin-2 (TNPO2), found in Homo sapiens (Human).